Here is a 1235-residue protein sequence, read N- to C-terminus: MNSQVMYHNVPTPPGNVSLAAAAPDGGLLYAGIRCINYISAPPANGEQPQVVTMSTRINILALDVSPMWGLGNGGPTKPFAIVGDDLSVQVWDCALGEAVIGHKAHQHQHEARDVRVVHHTTNSVLMSYLANGNILSMDASDLVIYCVASNTYCRRSTFISPRNHQLTMVRCSPYNDNLFAVGTAMGNVLVCDLRKMNIVYKFHGHKAPICGLAWREVPAAEDEKTNNLALSAEEWRSRNGGQEEKPKTKPPPLTKSKAAESDDPFDIYNFDHLEYEFGAPIAERRRKSSEDCGGEFVGLEKPAGAAVLDFVEACESVKAELLASRQEDKTQHVEVTLHDCEPTKPTGPLSDASTISNKNDASDSTEGSLEVIQYSSSSDDAVIVDGEAAKPKREVLHHIYHQAEVHASGTPQTKSEPQSNLQVVPAISAETISLTSVNSTHLETLLVSIDGDEVMMIWNTNTGAHAGKNYSKSKTAGKLNNVYWLNNHVIVSLSRHQLFFWSVEFERKMLRYKISKDKSHSCHLQDIVSFACDSSKEMIWLCRNNRQIGMMNPKTGRMADFYGTVAFGVRAMAECPDDMNKIALGCSDRRVAFFDISKLTTSCLPIDSVYVSSNVYCLAWSPNCLELAFGTFDGTVGILDVERMKVKTHLRTPHKKEVYSLVWQDHFIYFIVNRVLGFFDLRKSKIEPTIVNCISRPSYLSIRDSFLFVGTDDGLLQIHERDSGMEKSWSPFIRQSALFARYVTDIAWCPLDSNKFAVSGNDRSVYVMEFQPTERNWKTLHTFTANTEKASITSMRWSHTQKHLLLTFHIEGKVCLWNCNAPEKPPLTITYHCPMWCGMFLPTNENIIMCSGKALSVELIDIKDALEGDEKSICPKVDALLNVKWASKSLTQPYAPVLTAAEKKRQRRDQRKAAAKLEVDVANKDQKKIQESVTAVIDNPTNDKCTQETPVEEMLEALSLDKEQNNRSAKECPKCKEQSPDSFTHSRTCLYLTQKELNKSALEKLAIVLTEDSAKIDKSVLISKLFSSKVMAKELIATELTNLKHSNTKDIAPLCLAMSTFKLREELEQHIANKTLTERHVSLAPSVSFTLWQDCCRAYAKQMEEKGYIMHAATYLFSQGMQSEAIKLFLANEYYKEALVHARICLPATDPLIKTVINNWLEHLEGTGNFAAAALICVLDNEMLRGYSYLRKYRNCTPEIADLMDQIKRIGQLGGVLDGCAPNEPIHNGSTAEH.

A WD 1 repeat occupies Ser55–Gly102. A disordered region spans residues Asn227–Asp263. Residues Glu234–Lys248 are compositionally biased toward basic and acidic residues. 4 positions are modified to phosphoserine: Ser289, Ser290, Ser351, and Ser354. The segment at Asp340–Gly368 is disordered. Residues Asp352–Gly368 are compositionally biased toward polar residues. The residue at position 355 (Thr355) is a Phosphothreonine. A Phosphoserine modification is found at Ser357. Thr411 is subject to Phosphothreonine. WD repeat units follow at residues Ile428–Lys469, Lys475–Arg512, Thr565–Leu605, Tyr611–His650, Thr690–Trp730, Leu739–Lys779, and Thr788–Leu828. The short motif at Leu443–Leu447 is the LXXLL motif element. The segment covering Lys963 to Ser980 has biased composition (basic and acidic residues). Residues Lys963–Ser983 are disordered.

In terms of assembly, component of the core survival motor neuron (SMN) complex composed of Smn, Gem2, Gem3, rig/Gem5 and one of 3 almost identical Gem4 paralogs encoded by Glos/Gem4a, Gem4b or Gem4c. Interacts with nuclear receptors EcR, svp (seven up), usp (ultraspiracle), Hr39 and Hr3. Expressed in the brain and salivary glands of early and late second instar larvae. Expressed in nurse cells and oocytes.

It is found in the nucleus. Its subcellular location is the cytoplasm. It localises to the U-body. The protein resides in the gem. In terms of biological role, component of the survival motor neuron (SMN) complex that catalyzes the assembly of small nuclear ribonucleoproteins (snRNPs), the building blocks of the spliceosome, and thereby plays an important role in the splicing of cellular pre-mRNAs. Nuclear receptor cofactor for the ecdysone-regulated processes of molting and puparium formation. Acts downstream from ecdysone biosynthesis and release to control the expression of specific ecdysone-regulated genes such as Eip74EF (E74). Essential in muscle and neuronal tissues for motor function, including climbing ability and flight. The chain is Gem-associated protein 5 from Drosophila melanogaster (Fruit fly).